A 251-amino-acid chain; its full sequence is Maleate isomerase (251 aa).

Substrate contacts are provided by residues asparagine 15, 81–83, tyrosine 138, and asparagine 168; that span reads CLV. The active-site Nucleophile is cysteine 81. At cysteine 81 the chain carries S-(2-succinyl)cysteine. Cysteine 199 acts as the Proton donor in catalysis. Position 200–201 (200–201) interacts with substrate; sequence VQ.

It belongs to the maleate isomerase family. In terms of assembly, homodimer.

It catalyses the reaction maleate = fumarate. Its function is as follows. Catalyzes cis-trans isomerization of the C2-C3 double bond in maleate to yield fumarate. This chain is Maleate isomerase, found in Geobacillus stearothermophilus (Bacillus stearothermophilus).